We begin with the raw amino-acid sequence, 617 residues long: Dihydroxy-acid dehydratase (617 aa).

Asp81 lines the Mg(2+) pocket. Position 122 (Cys122) interacts with [2Fe-2S] cluster. Asp123 and Lys124 together coordinate Mg(2+). Position 124 is an N6-carboxylysine (Lys124). Cys195 serves as a coordination point for [2Fe-2S] cluster. Glu491 contacts Mg(2+). The active-site Proton acceptor is Ser517.

Belongs to the IlvD/Edd family. Homodimer. [2Fe-2S] cluster is required as a cofactor. Requires Mg(2+) as cofactor.

It catalyses the reaction (2R)-2,3-dihydroxy-3-methylbutanoate = 3-methyl-2-oxobutanoate + H2O. The enzyme catalyses (2R,3R)-2,3-dihydroxy-3-methylpentanoate = (S)-3-methyl-2-oxopentanoate + H2O. It participates in amino-acid biosynthesis; L-isoleucine biosynthesis; L-isoleucine from 2-oxobutanoate: step 3/4. It functions in the pathway amino-acid biosynthesis; L-valine biosynthesis; L-valine from pyruvate: step 3/4. Its function is as follows. Functions in the biosynthesis of branched-chain amino acids. Catalyzes the dehydration of (2R,3R)-2,3-dihydroxy-3-methylpentanoate (2,3-dihydroxy-3-methylvalerate) into 2-oxo-3-methylpentanoate (2-oxo-3-methylvalerate) and of (2R)-2,3-dihydroxy-3-methylbutanoate (2,3-dihydroxyisovalerate) into 2-oxo-3-methylbutanoate (2-oxoisovalerate), the penultimate precursor to L-isoleucine and L-valine, respectively. The sequence is that of Dihydroxy-acid dehydratase from Hydrogenovibrio crunogenus (strain DSM 25203 / XCL-2) (Thiomicrospira crunogena).